The following is a 94-amino-acid chain: Large ribosomal subunit protein uL23 (94 aa).

It belongs to the universal ribosomal protein uL23 family. As to quaternary structure, part of the 50S ribosomal subunit. Contacts protein L29, and trigger factor when it is bound to the ribosome.

In terms of biological role, one of the early assembly proteins it binds 23S rRNA. One of the proteins that surrounds the polypeptide exit tunnel on the outside of the ribosome. Forms the main docking site for trigger factor binding to the ribosome. This chain is Large ribosomal subunit protein uL23, found in Lysinibacillus sphaericus (strain C3-41).